The primary structure comprises 242 residues: Proteasome subunit alpha (242 aa).

It belongs to the peptidase T1A family. As to quaternary structure, the 20S proteasome core is composed of 14 alpha and 14 beta subunits that assemble into four stacked heptameric rings, resulting in a barrel-shaped structure. The two inner rings, each composed of seven catalytic beta subunits, are sandwiched by two outer rings, each composed of seven alpha subunits. The catalytic chamber with the active sites is on the inside of the barrel. Has a gated structure, the ends of the cylinder being occluded by the N-termini of the alpha-subunits. Is capped at one or both ends by the proteasome regulatory ATPase, PAN.

The protein localises to the cytoplasm. With respect to regulation, the formation of the proteasomal ATPase PAN-20S proteasome complex, via the docking of the C-termini of PAN into the intersubunit pockets in the alpha-rings, triggers opening of the gate for substrate entry. Interconversion between the open-gate and close-gate conformations leads to a dynamic regulation of the 20S proteasome proteolysis activity. Component of the proteasome core, a large protease complex with broad specificity involved in protein degradation. This Sulfurisphaera tokodaii (strain DSM 16993 / JCM 10545 / NBRC 100140 / 7) (Sulfolobus tokodaii) protein is Proteasome subunit alpha.